The primary structure comprises 465 residues: A-type ATP synthase subunit B (465 aa).

This sequence belongs to the ATPase alpha/beta chains family. As to quaternary structure, has multiple subunits with at least A(3), B(3), C, D, E, F, H, I and proteolipid K(x).

Its subcellular location is the cell membrane. In terms of biological role, component of the A-type ATP synthase that produces ATP from ADP in the presence of a proton gradient across the membrane. The B chain is a regulatory subunit. The sequence is that of A-type ATP synthase subunit B from Pyrococcus horikoshii (strain ATCC 700860 / DSM 12428 / JCM 9974 / NBRC 100139 / OT-3).